Reading from the N-terminus, the 539-residue chain is Prolyl 4-hydroxylase subunit alpha-2 (539 aa).

Residues 1–16 (MRAVLLVCLLAGLAHA) form the signal peptide. Asn110 carries an N-linked (GlcNAc...) asparagine glycan. Positions 401–509 (TSEELQVANY…KWVSNKWIHE (109 aa)) constitute a Fe2OG dioxygenase domain. Fe cation is bound by residues His419, Asp421, and His490. Lys500 contributes to the 2-oxoglutarate binding site.

It belongs to the P4HA family. Heterotetramer of two alpha chains and two beta chains. Exist either as a phy-2(2)/pdi-2(2) tetramer or as a phy-1/phy-2/pdi-2(2) tetramer. Fe(2+) is required as a cofactor. The cofactor is L-ascorbate.

The protein localises to the endoplasmic reticulum lumen. It catalyses the reaction L-prolyl-[collagen] + 2-oxoglutarate + O2 = trans-4-hydroxy-L-prolyl-[collagen] + succinate + CO2. Catalyzes the post-translational formation of 4-hydroxyproline in -Xaa-Pro-Gly- sequences in collagens and other proteins. In Caenorhabditis elegans, this protein is Prolyl 4-hydroxylase subunit alpha-2 (phy-2).